A 153-amino-acid chain; its full sequence is Putative pre-16S rRNA nuclease (153 aa).

Belongs to the YqgF nuclease family.

The protein localises to the cytoplasm. Could be a nuclease involved in processing of the 5'-end of pre-16S rRNA. This Prochlorococcus marinus (strain SARG / CCMP1375 / SS120) protein is Putative pre-16S rRNA nuclease.